We begin with the raw amino-acid sequence, 333 residues long: Sphingomyelinase C (333 aa).

An N-terminal signal peptide occupies residues 1–27 (MKGKLLKGVLSFGIGLGVLYGGSSVQA). A disulfide bond links cysteine 150 and cysteine 186.

The protein belongs to the neutral sphingomyelinase family. Mg(2+) serves as cofactor.

Its subcellular location is the secreted. It carries out the reaction a sphingomyelin + H2O = phosphocholine + an N-acylsphing-4-enine + H(+). Activated by cobalt and manganese ions. In terms of biological role, required, with sphingomyelinase, to effect target cell lysis (hemolysis). The chain is Sphingomyelinase C (sph) from Bacillus cereus.